The primary structure comprises 1120 residues: Mechanosensitive channel MscK (1120 aa).

Positions 1–33 are cleaved as a signal peptide; that stretch reads MTMFQYYKRSRHFVFSAFIAFVFVLLCQNTAFA. Residues 34-499 lie on the Periplasmic side of the membrane; sequence RASSNGDLPT…MKITVNWQKA (466 aa). Coiled-coil stretches lie at residues 43–98, 126–266, and 360–422; these read TKAD…VAEA, STLS…TLTE, and DELE…RREL. The helical transmembrane segment at 500 to 520 threads the bilayer; it reads WPAVFIAFLAGLPLLLIAGLI. Residues 521-560 lie on the Cytoplasmic side of the membrane; the sequence is HWRLGWLKAYQQKLASAVGSLRNDSQLNTPKAILIDLIRA. A helical membrane pass occupies residues 561 to 581; that stretch reads LPVCLIILAVGLILLTMQLNI. Residue Ser582 is a topological domain, periplasmic. The chain crosses the membrane as a helical span at residues 583 to 603; it reads ELLWSFSKKLAIFWLVFGLCW. The Cytoplasmic segment spans residues 604–634; that stretch reads KVLEKNGVAVRHFGMPEQQTSHWRRQIVRIS. Residues 635 to 655 traverse the membrane as a helical segment; it reads LALLPIHFWSVVAELSPLHLM. Over 656–657 the chain is Periplasmic; that stretch reads DD. The helical transmembrane segment at 658 to 678 threads the bilayer; that stretch reads VLGQAMIFFNLLLIAFLVWPM. Over 679 to 692 the chain is Cytoplasmic; the sequence is CRESWRDKESHTMR. A helical membrane pass occupies residues 693 to 713; that stretch reads LVTITVLSIIPIALMVLTATG. The Periplasmic portion of the chain corresponds to 714–728; sequence YFYTTLRLAGRWIET. The helical transmembrane segment at 729-749 threads the bilayer; the sequence is VYLVIIWNLLYQTVLRGLSVA. The Cytoplasmic portion of the chain corresponds to 750 to 796; sequence ARRIAWRRALARRQNLVKEGAEGAEPPEEPTIALEQVNQQTLRITML. A helical transmembrane segment spans residues 797–817; the sequence is LMFALFGVMFWAIWSDLITVF. The Periplasmic segment spans residues 818 to 839; the sequence is SYLDSITLWHYNGTEAGAAVVK. A helical membrane pass occupies residues 840–860; the sequence is NVTMGSLLFAIIASMVAWALI. The Cytoplasmic segment spans residues 861–886; the sequence is RNLPGLLEVLVLSRLNMRQGASYAIT. The helical transmembrane segment at 887 to 907 threads the bilayer; sequence TILNYIIIAVGAMTVFGSLGV. The Periplasmic segment spans residues 908–921; that stretch reads SWDKLQWLAAALSV. Residues 922–942 traverse the membrane as a helical segment; that stretch reads GLGFGLQEIFGNFVSGLIILF. Over 943–1120 the chain is Cytoplasmic; sequence ERPVRIGDTV…KGDDPTPAVG (178 aa). A coiled-coil region spans residues 1057-1081; sequence YVRELRDRSRTVDELNRTIDQLCRE.

It belongs to the MscS (TC 1.A.23) family.

The protein resides in the cell inner membrane. Mechanosensitive channel that opens in response to membrane tension and specific ionic conditions. Requires high concentrations of external K(+), NH(4)(+), Rb(+) or Cs(+) to gate. May participate in the regulation of osmotic pressure changes within the cell, although it does not appear to have a major role in osmolarity regulation. Forms an ion channel of 1.0 nanosiemens conductance. The channel can remain active for between 30 seconds and over 3 minutes; it does not desensitize upon extended pressure. Its activity is masked in wild-type cells by the MscS channel. This is Mechanosensitive channel MscK (mscK) from Escherichia coli (strain K12).